The chain runs to 339 residues: UDP-N-acetylenolpyruvoylglucosamine reductase (339 aa).

An FAD-binding PCMH-type domain is found at 19–189 (VDVQARLFAE…LRVRFKLSRV (171 aa)). Residue R166 is part of the active site. The Proton donor role is filled by S239. E335 is a catalytic residue.

The protein belongs to the MurB family. FAD serves as cofactor.

Its subcellular location is the cytoplasm. The enzyme catalyses UDP-N-acetyl-alpha-D-muramate + NADP(+) = UDP-N-acetyl-3-O-(1-carboxyvinyl)-alpha-D-glucosamine + NADPH + H(+). Its pathway is cell wall biogenesis; peptidoglycan biosynthesis. Functionally, cell wall formation. The protein is UDP-N-acetylenolpyruvoylglucosamine reductase of Pseudomonas syringae pv. syringae (strain B728a).